Consider the following 381-residue polypeptide: E3 ubiquitin-protein ligase ATL15 (381 aa).

A signal peptide spans 1–23 (MVVMSRVSFYSSFLLLLLEVVVA). The helical transmembrane segment at 40-60 (AIIMIVLVSVFFALGCISVYM) threads the bilayer. Residues 118–160 (CPVCLNEFEDDETLRLIPQCCHVFHPGCIDAWLRSQTTCPLCR) form an RING-type; atypical zinc finger.

Belongs to the RING-type zinc finger family. ATL subfamily.

The protein localises to the membrane. The enzyme catalyses S-ubiquitinyl-[E2 ubiquitin-conjugating enzyme]-L-cysteine + [acceptor protein]-L-lysine = [E2 ubiquitin-conjugating enzyme]-L-cysteine + N(6)-ubiquitinyl-[acceptor protein]-L-lysine.. It participates in protein modification; protein ubiquitination. In terms of biological role, E3 ubiquitin-protein ligase able to catalyze polyubiquitination with ubiquitin-conjugating enzyme E2 UBC8, UBC10, UBC11, UBC28 and UBC29 in vitro. This chain is E3 ubiquitin-protein ligase ATL15 (ATL15), found in Arabidopsis thaliana (Mouse-ear cress).